Consider the following 60-residue polypeptide: MSNFSVFLIALLFCSVFILSEAQIYTSKECNGSSECYSHCEGITGKRSGKCINKKCYCYR.

The signal sequence occupies residues 1-22 (MSNFSVFLIALLFCSVFILSEA). 3 disulfides stabilise this stretch: Cys-30/Cys-51, Cys-36/Cys-56, and Cys-40/Cys-58.

Belongs to the short scorpion toxin superfamily. Potassium channel inhibitor family. In terms of tissue distribution, expressed by the venom gland.

It localises to the secreted. Recombinant toxin selectively inhibits Kv1.3/KCNA3 potassium channels with an IC(50) of 91 pM. This Isometrus maculatus (Lesser brown scorpion) protein is Potassium channel toxin ImKTx88.